The sequence spans 278 residues: Energy-coupling factor transporter ATP-binding protein EcfA1 (278 aa).

Positions L5–D239 constitute an ABC transporter domain. Residue G39–S46 coordinates ATP.

It belongs to the ABC transporter superfamily. Energy-coupling factor EcfA family. As to quaternary structure, forms a stable energy-coupling factor (ECF) transporter complex composed of 2 membrane-embedded substrate-binding proteins (S component), 2 ATP-binding proteins (A component) and 2 transmembrane proteins (T component).

It is found in the cell membrane. In terms of biological role, ATP-binding (A) component of a common energy-coupling factor (ECF) ABC-transporter complex. Unlike classic ABC transporters this ECF transporter provides the energy necessary to transport a number of different substrates. The polypeptide is Energy-coupling factor transporter ATP-binding protein EcfA1 (Halalkalibacterium halodurans (strain ATCC BAA-125 / DSM 18197 / FERM 7344 / JCM 9153 / C-125) (Bacillus halodurans)).